A 139-amino-acid chain; its full sequence is Invertebrate-type lysozyme 2 (139 aa).

Residues 1–18 form the signal peptide; the sequence is MFVKAILLLSIAVAYASA. The region spanning 19-138 is the I-type lysozyme domain; sequence DCLHCICMRE…WKGVHSCCGC (120 aa). Cystine bridges form between Cys20-Cys106, Cys23-Cys138, Cys25-Cys31, Cys36-Cys45, Cys58-Cys86, Cys76-Cys82, and Cys98-Cys120. Glu28 functions as the Proton donor in the catalytic mechanism. Catalysis depends on Asp39, which acts as the Nucleophile. 51–57 provides a ligand contact to substrate; the sequence is KIPYYED. Residues Tyr90 and 113-115 contribute to the substrate site; that span reads HNG.

The protein belongs to the glycosyl hydrolase 22 family. Type-I lysozyme subfamily. Expressed in pharyngeal muscle cell pm3, nerve ring and intestine.

The enzyme catalyses Hydrolysis of (1-&gt;4)-beta-linkages between N-acetylmuramic acid and N-acetyl-D-glucosamine residues in a peptidoglycan and between N-acetyl-D-glucosamine residues in chitodextrins.. In terms of biological role, has bacteriolytic activity against Gram-positive bacteria. May play a role in resistance to Gram-positive bacterium S.aureus infection. The chain is Invertebrate-type lysozyme 2 from Caenorhabditis elegans.